We begin with the raw amino-acid sequence, 257 residues long: MIDLPRHPPSMLPVIRTVPEHAATGELKRRYDAVKSAFDVPWMGVVAMAHTQYPRFFDALWEGFEPIAGTRAFQDACRAMRAATEAGVERSLGISPLAHRLQDLGYDPREIGEIRTIIEVFSHGNYPYILLATVSRYLLSGGDLSGEPQVFETSPRSPHIFHQPILMEPHHADEHTRGIFADIQATLALPILNTDYRALARWPSYFHLAWAELRPLIRTPSHAALSQQLHEQAIAVLRTLPNPARLKGDMVTRGCGR.

It belongs to the HAD-like hydrolase superfamily. S-2-haloalkanoic acid dehalogenase family.

It carries out the reaction an (R)-2-haloacid + H2O = a (2S)-2-hydroxycarboxylate + a halide anion + H(+). Its function is as follows. Catalyzes the hydrolytic dehalogenation of small (R)-2-haloalkanoic acids to yield the corresponding (S)-2-hydroxyalkanoic acids. Acts on acids of short chain lengths, C(2) to C(4), with inversion of configuration at C-2. In Rhizobium sp. (strain NHG3), this protein is (R)-2-haloacid dehalogenase (dehI).